The following is an 80-amino-acid chain: Putative membrane protein insertion efficiency factor (80 aa).

It belongs to the UPF0161 family.

It is found in the cell inner membrane. Could be involved in insertion of integral membrane proteins into the membrane. This chain is Putative membrane protein insertion efficiency factor, found in Picosynechococcus sp. (strain ATCC 27264 / PCC 7002 / PR-6) (Agmenellum quadruplicatum).